Consider the following 483-residue polypeptide: Adenylyltransferase and sulfurtransferase uba4 (483 aa).

Residues Gly-100, Asp-121, 128–132 (SNLHR), Lys-145, and 178–179 (DN) contribute to the ATP site. Residues Cys-227 and Cys-230 each contribute to the Zn(2+) site. The active-site Glycyl thioester intermediate; for adenylyltransferase activity is the Cys-244. Positions 306 and 309 each coordinate Zn(2+). Residues 366–481 (ISKEPTIIDV…WREQIDPDWP (116 aa)) enclose the Rhodanese domain. Cys-436 acts as the Cysteine persulfide intermediate; for sulfurtransferase activity in catalysis.

The protein in the N-terminal section; belongs to the HesA/MoeB/ThiF family. UBA4 subfamily. Zn(2+) serves as cofactor.

The protein resides in the cytoplasm. It localises to the cytosol. It carries out the reaction [molybdopterin-synthase sulfur-carrier protein]-C-terminal Gly-Gly + ATP + H(+) = [molybdopterin-synthase sulfur-carrier protein]-C-terminal Gly-Gly-AMP + diphosphate. The enzyme catalyses [molybdopterin-synthase sulfur-carrier protein]-C-terminal Gly-Gly-AMP + S-sulfanyl-L-cysteinyl-[cysteine desulfurase] + AH2 = [molybdopterin-synthase sulfur-carrier protein]-C-terminal-Gly-aminoethanethioate + L-cysteinyl-[cysteine desulfurase] + A + AMP + 2 H(+). The protein operates within tRNA modification; 5-methoxycarbonylmethyl-2-thiouridine-tRNA biosynthesis. Its function is as follows. Plays a central role in 2-thiolation of mcm(5)S(2)U at tRNA wobble positions of cytosolic tRNA(Lys), tRNA(Glu) and tRNA(Gln). Also essential during biosynthesis of the molybdenum cofactor. Acts by mediating the C-terminal thiocarboxylation of sulfur carriers urm1 and mocs2a. Its N-terminus first activates urm1 and mocs2a as acyl-adenylates (-COAMP), then the persulfide sulfur on the catalytic cysteine is transferred to urm1 and mocs2a to form thiocarboxylation (-COSH) of their C-terminus. The reaction probably involves hydrogen sulfide that is generated from the persulfide intermediate and that acts as a nucleophile towards urm1 and mocs2a. Subsequently, a transient disulfide bond is formed. Does not use thiosulfate as sulfur donor; nfs1 probably acting as a sulfur donor for thiocarboxylation reactions. In Neosartorya fischeri (strain ATCC 1020 / DSM 3700 / CBS 544.65 / FGSC A1164 / JCM 1740 / NRRL 181 / WB 181) (Aspergillus fischerianus), this protein is Adenylyltransferase and sulfurtransferase uba4.